Here is a 315-residue protein sequence, read N- to C-terminus: Apolipoprotein F (315 aa).

The N-terminal stretch at 1–24 is a signal peptide; that stretch reads MHSLRLILMSIQLLCYLLLCPVDA. A propeptide spanning residues 25–154 is cleaved from the precursor; it reads TSHGEATSVS…EQPGPKRAKR (130 aa).

The protein belongs to the apolipoprotein F family. Liver.

The protein resides in the secreted. In terms of biological role, minor apolipoprotein that associates with LDL. Inhibits cholesteryl ester transfer protein (CETP) activity and appears to be an important regulator of cholesterol transport. Also associates to a lesser degree with VLDL, Apo-AI and Apo-AII. This chain is Apolipoprotein F (Apof), found in Mus musculus (Mouse).